A 583-amino-acid chain; its full sequence is Leucine aminopeptidase 2, chloroplastic (583 aa).

The transit peptide at 1–70 (MAVTLVTSFA…ISHATLGLTQ (70 aa)) directs the protein to the chloroplast. Residues K351 and D356 each contribute to the Mn(2+) site. Residue K363 is part of the active site. Residues D376, D436, and E438 each coordinate Mn(2+). Residue R440 is part of the active site.

The protein belongs to the peptidase M17 family. Homohexamer (dimer of homotrimers). Requires Mn(2+) as cofactor.

The protein resides in the plastid. It is found in the chloroplast. The catalysed reaction is Release of an N-terminal amino acid, Xaa-|-Yaa-, in which Xaa is preferably Leu, but may be other amino acids including Pro although not Arg or Lys, and Yaa may be Pro. Amino acid amides and methyl esters are also readily hydrolyzed, but rates on arylamides are exceedingly low.. The enzyme catalyses Release of N-terminal proline from a peptide.. Its function is as follows. Presumably involved in the processing and regular turnover of intracellular proteins. Catalyzes the removal of unsubstituted N-terminal amino acids from various peptides. Possesses leucine aminopeptidase activity against the model substrate leucine-amido methyl coumarin. Does not seem to possess Cys-Gly dipeptidase activity. Functionally, functions as a molecular chaperone to protect proteins from heat-induced damage. This Arabidopsis thaliana (Mouse-ear cress) protein is Leucine aminopeptidase 2, chloroplastic.